We begin with the raw amino-acid sequence, 172 residues long: Outer-membrane lipoprotein carrier protein (172 aa).

The signal sequence occupies residues 1–16 (MRIALLWVAFGALALA).

The protein belongs to the LolA family. Monomer.

The protein resides in the periplasm. Its function is as follows. Participates in the translocation of lipoproteins from the inner membrane to the outer membrane. Only forms a complex with a lipoprotein if the residue after the N-terminal Cys is not an aspartate (The Asp acts as a targeting signal to indicate that the lipoprotein should stay in the inner membrane). The sequence is that of Outer-membrane lipoprotein carrier protein from Wolinella succinogenes (strain ATCC 29543 / DSM 1740 / CCUG 13145 / JCM 31913 / LMG 7466 / NCTC 11488 / FDC 602W) (Vibrio succinogenes).